Consider the following 209-residue polypeptide: Urease accessory protein UreG (209 aa).

Position 11–18 (11–18) interacts with GTP; the sequence is GPVGSGKT.

Belongs to the SIMIBI class G3E GTPase family. UreG subfamily. As to quaternary structure, homodimer. UreD, UreF and UreG form a complex that acts as a GTP-hydrolysis-dependent molecular chaperone, activating the urease apoprotein by helping to assemble the nickel containing metallocenter of UreC. The UreE protein probably delivers the nickel.

The protein localises to the cytoplasm. Facilitates the functional incorporation of the urease nickel metallocenter. This process requires GTP hydrolysis, probably effectuated by UreG. The chain is Urease accessory protein UreG from Edwardsiella ictaluri (strain 93-146).